We begin with the raw amino-acid sequence, 131 residues long: Arsenate reductase 2 (131 aa).

Catalysis depends on nucleophile residues Cys10, Cys82, and Cys89. 2 disulfides stabilise this stretch: Cys10-Cys82 and Cys82-Cys89.

It belongs to the low molecular weight phosphotyrosine protein phosphatase family. Thioredoxin-coupled ArsC subfamily.

It is found in the cytoplasm. The catalysed reaction is arsenate + [thioredoxin]-dithiol + H(+) = arsenite + [thioredoxin]-disulfide + H2O. Catalyzes the reduction of arsenate [As(V)] to arsenite [As(III)]. This Staphylococcus haemolyticus (strain JCSC1435) protein is Arsenate reductase 2.